We begin with the raw amino-acid sequence, 406 residues long: Tryptophan synthase beta chain (406 aa).

Residue lysine 99 is modified to N6-(pyridoxal phosphate)lysine.

This sequence belongs to the TrpB family. Tetramer of two alpha and two beta chains. Requires pyridoxal 5'-phosphate as cofactor.

The catalysed reaction is (1S,2R)-1-C-(indol-3-yl)glycerol 3-phosphate + L-serine = D-glyceraldehyde 3-phosphate + L-tryptophan + H2O. The protein operates within amino-acid biosynthesis; L-tryptophan biosynthesis; L-tryptophan from chorismate: step 5/5. The beta subunit is responsible for the synthesis of L-tryptophan from indole and L-serine. In Rhizobium meliloti (strain 1021) (Ensifer meliloti), this protein is Tryptophan synthase beta chain.